A 121-amino-acid chain; its full sequence is MALNIEEIIASVKEATVLELNDLVKAIEEEFGVTAAAPVAVAAAGGAAAEEKTDFDLVLAGAGDQKIKVIKVVREITGLGLKEAKELVDNTPKPLKEGIAKEEAEELKAKLEEVGASVEVK.

This sequence belongs to the bacterial ribosomal protein bL12 family. As to quaternary structure, homodimer. Part of the ribosomal stalk of the 50S ribosomal subunit. Forms a multimeric L10(L12)X complex, where L10 forms an elongated spine to which 2 to 4 L12 dimers bind in a sequential fashion. Binds GTP-bound translation factors.

Its function is as follows. Forms part of the ribosomal stalk which helps the ribosome interact with GTP-bound translation factors. Is thus essential for accurate translation. This chain is Large ribosomal subunit protein bL12, found in Bacillus pumilus (strain SAFR-032).